Consider the following 209-residue polypeptide: Pyridoxine/pyridoxamine 5'-phosphate oxidase (209 aa).

Substrate contacts are provided by residues 7–10 (RADY) and lysine 64. FMN-binding positions include 59–64 (RIVLLK), 74–75 (FT), and lysine 81. 3 residues coordinate substrate: tyrosine 121, arginine 125, and serine 129. FMN contacts are provided by residues 138 to 139 (QS), tryptophan 182, and arginine 192.

The protein belongs to the pyridoxamine 5'-phosphate oxidase family. In terms of assembly, homodimer. FMN is required as a cofactor.

The enzyme catalyses pyridoxamine 5'-phosphate + O2 + H2O = pyridoxal 5'-phosphate + H2O2 + NH4(+). It carries out the reaction pyridoxine 5'-phosphate + O2 = pyridoxal 5'-phosphate + H2O2. It participates in cofactor metabolism; pyridoxal 5'-phosphate salvage; pyridoxal 5'-phosphate from pyridoxamine 5'-phosphate: step 1/1. The protein operates within cofactor metabolism; pyridoxal 5'-phosphate salvage; pyridoxal 5'-phosphate from pyridoxine 5'-phosphate: step 1/1. Functionally, catalyzes the oxidation of either pyridoxine 5'-phosphate (PNP) or pyridoxamine 5'-phosphate (PMP) into pyridoxal 5'-phosphate (PLP). The chain is Pyridoxine/pyridoxamine 5'-phosphate oxidase from Haemophilus ducreyi (strain 35000HP / ATCC 700724).